The chain runs to 381 residues: Adenylate cyclase (381 aa).

The interval 1-30 (MTVDDTGSGADGDGRVDPEPAPDSADPGED) is disordered. In terms of domain architecture, Guanylate cyclase spans 191-300 (AVGFADLVGF…TTVNLASRLT (110 aa)). Residues Asp-196 and Asp-240 each contribute to the Mg(2+) site.

The protein belongs to the adenylyl cyclase class-3 family. Mg(2+) is required as a cofactor.

It carries out the reaction ATP = 3',5'-cyclic AMP + diphosphate. This Streptomyces coelicolor (strain ATCC BAA-471 / A3(2) / M145) protein is Adenylate cyclase (cya).